We begin with the raw amino-acid sequence, 420 residues long: Tubulin epsilon and delta complex protein 1 (420 aa).

Residues 276 to 340 adopt a coiled-coil conformation; that stretch reads SEGGLGELES…AVQQELAALQ (65 aa). A compositionally biased stretch (polar residues) spans 342–351; it reads SWEQSSTPGQ. The interval 342-369 is disordered; the sequence is SWEQSSTPGQPQRPHRLVRSKDGAPRPQ. Residues 377-409 are a coiled coil; it reads IRTLSAKEACLKKALHQLQRQCQQELARLAGAL.

In terms of assembly, interacts with TEDC2. Found in a complex with TEDC1, TEDC2, TUBE1 and TUBD1.

It is found in the cell projection. The protein resides in the cilium. It localises to the cytoplasm. Its subcellular location is the cytoskeleton. The protein localises to the microtubule organizing center. It is found in the centrosome. The protein resides in the centriole. Its function is as follows. Acts as a positive regulator of ciliary hedgehog signaling. Required for centriole stability. May play a role in counteracting perturbation of actin filaments, such as after treatment with the actin depolymerizing microbial metabolite Chivosazole F. This chain is Tubulin epsilon and delta complex protein 1, found in Mus musculus (Mouse).